Consider the following 578-residue polypeptide: Zinc finger protein with KRAB and SCAN domains 8 (578 aa).

The tract at residues 1 to 20 (MAEESRKPSAPSPPDQTPEE) is disordered. Phosphoserine is present on serine 12. A Glycyl lysine isopeptide (Lys-Gly) (interchain with G-Cter in SUMO2) cross-link involves residue lysine 26. The SCAN box domain occupies 51–133 (RLRFRQLCYQ…TLLEDLERQI (83 aa)). The tract at residues 158-205 (ASAPEPPNTQLQSEATQHKSPVPQESQERAMSTSQSPTRSQKGSSGDQ) is disordered. A compositionally biased stretch (polar residues) spans 165–205 (NTQLQSEATQHKSPVPQESQERAMSTSQSPTRSQKGSSGDQ). Residues lysine 176 and lysine 199 each participate in a glycyl lysine isopeptide (Lys-Gly) (interchain with G-Cter in SUMO2) cross-link. Serine 201 is modified (phosphoserine). Residues 220–316 (EKIEDMAVSL…GRLERQRGNP (97 aa)) form the KRAB domain. Glycyl lysine isopeptide (Lys-Gly) (interchain with G-Cter in SUMO2) cross-links involve residues lysine 221, lysine 272, and lysine 288. 2 C2H2-type zinc fingers span residues 322–344 (HKCD…WRIH) and 350–372 (YQCN…QDIH). Residues lysine 374 and lysine 376 each participate in a glycyl lysine isopeptide (Lys-Gly) (interchain with G-Cter in SUMO2) cross-link. 7 consecutive C2H2-type zinc fingers follow at residues 378-400 (YHCK…QRIH), 406-428 (YQCN…QRIH), 434-456 (YECN…QRIH), 462-484 (YECD…QRSH), 490-512 (YKCN…QRIH), 518-540 (YKCK…LRIH), and 546-568 (YQCN…QRIH). Glycyl lysine isopeptide (Lys-Gly) (interchain with G-Cter in SUMO2) cross-links involve residues lysine 413 and lysine 441. Residue lysine 502 forms a Glycyl lysine isopeptide (Lys-Gly) (interchain with G-Cter in SUMO2) linkage. Residue lysine 572 forms a Glycyl lysine isopeptide (Lys-Gly) (interchain with G-Cter in SUMO2) linkage.

This sequence belongs to the krueppel C2H2-type zinc-finger protein family.

Its subcellular location is the nucleus. May be involved in transcriptional regulation. The sequence is that of Zinc finger protein with KRAB and SCAN domains 8 (ZKSCAN8) from Pan troglodytes (Chimpanzee).